Consider the following 180-residue polypeptide: ATP synthase subunit delta 2 (180 aa).

The protein belongs to the ATPase delta chain family. In terms of assembly, F-type ATPases have 2 components, F(1) - the catalytic core - and F(0) - the membrane proton channel. F(1) has five subunits: alpha(3), beta(3), gamma(1), delta(1), epsilon(1). F(0) has three main subunits: a(1), b(2) and c(10-14). The alpha and beta chains form an alternating ring which encloses part of the gamma chain. F(1) is attached to F(0) by a central stalk formed by the gamma and epsilon chains, while a peripheral stalk is formed by the delta and b chains.

The protein localises to the cell inner membrane. F(1)F(0) ATP synthase produces ATP from ADP in the presence of a proton or sodium gradient. F-type ATPases consist of two structural domains, F(1) containing the extramembraneous catalytic core and F(0) containing the membrane proton channel, linked together by a central stalk and a peripheral stalk. During catalysis, ATP synthesis in the catalytic domain of F(1) is coupled via a rotary mechanism of the central stalk subunits to proton translocation. Functionally, this protein is part of the stalk that links CF(0) to CF(1). It either transmits conformational changes from CF(0) to CF(1) or is implicated in proton conduction. In Vibrio campbellii (strain ATCC BAA-1116), this protein is ATP synthase subunit delta 2.